The primary structure comprises 131 residues: MIQIVFDSKTGNVQRFVDKTPFRNKRKVSTEEYLDEPFVLITYTTGFGEVPKTTEMFLEKNAHLLLGVAASGNRVWGDNFAKSAEKISKQYQVPILGKFELSGTAKDVELFTQEVERVVTKSSAKMDPVKQ.

The protein belongs to the NrdI family.

Functionally, probably involved in ribonucleotide reductase function. This chain is Protein NrdI, found in Bacillus licheniformis (strain ATCC 14580 / DSM 13 / JCM 2505 / CCUG 7422 / NBRC 12200 / NCIMB 9375 / NCTC 10341 / NRRL NRS-1264 / Gibson 46).